A 177-amino-acid chain; its full sequence is Transcription antitermination protein NusB (177 aa).

Positions 1-36 (MTEQPTKPTGSRPPRQPRTGLTSTGARKAGSKSDRS) are disordered.

This sequence belongs to the NusB family.

Involved in transcription antitermination. Required for transcription of ribosomal RNA (rRNA) genes. Binds specifically to the boxA antiterminator sequence of the ribosomal RNA (rrn) operons. This chain is Transcription antitermination protein NusB, found in Albidiferax ferrireducens (strain ATCC BAA-621 / DSM 15236 / T118) (Rhodoferax ferrireducens).